Consider the following 52-residue polypeptide: Conotoxin Cal9.2c (52 aa).

Residues 1–6 (KKGVTL) constitute a propeptide that is removed on maturation. Cystine bridges form between C14/C31, C19/C41, and C21/C46.

Expressed by the venom duct.

It localises to the secreted. In terms of biological role, probable neurotoxin with unknown target. Possibly targets ion channels. The polypeptide is Conotoxin Cal9.2c (Californiconus californicus (California cone)).